The chain runs to 232 residues: Ubiquinone biosynthesis O-methyltransferase (232 aa).

Residues R36, G55, D76, and M120 each contribute to the S-adenosyl-L-methionine site.

Belongs to the methyltransferase superfamily. UbiG/COQ3 family.

It carries out the reaction a 3-demethylubiquinol + S-adenosyl-L-methionine = a ubiquinol + S-adenosyl-L-homocysteine + H(+). It catalyses the reaction a 3-(all-trans-polyprenyl)benzene-1,2-diol + S-adenosyl-L-methionine = a 2-methoxy-6-(all-trans-polyprenyl)phenol + S-adenosyl-L-homocysteine + H(+). The protein operates within cofactor biosynthesis; ubiquinone biosynthesis. Functionally, O-methyltransferase that catalyzes the 2 O-methylation steps in the ubiquinone biosynthetic pathway. The sequence is that of Ubiquinone biosynthesis O-methyltransferase from Paraburkholderia phymatum (strain DSM 17167 / CIP 108236 / LMG 21445 / STM815) (Burkholderia phymatum).